Here is a 442-residue protein sequence, read N- to C-terminus: MQKTTPITAYKSTCLSGKIKIPGDKSISHRSLILGGLANGETHIHGLLESDDVLNTAAAMQAMGACIIKKADRWIIRGTGNGCLLAAEKPLNFGNAGTGARLVMGMVGPYHMKTTFIGDASLSKRPMGRILNPLRLMGVEIEATHGDRLPLTLYGPKMANPIRYRIPIASAQVKSAILLAGLNTAGTTTVIEPILTRDHTEKMLKAFGAELEIKTDAEGTRFIHLNGQPHLTGQTIHIPGDPSSAAFPIIAALLVENSDITIENVLINKSRMGLIETLWEMDAKIELLNQHKTGGENVADLRVKSSMLKGVTVPKERAPSMIDEYPALAVAAAFAEGKTVMLGIDELRVKESDRLSALAQGLKINHVDCEEGKDFLIVHGKSSAKGLGGGHVTTHLDHRIAMSFLIFGLVSEKPVTIDDKRMIATSFPEFIPFIQQLGGKIS.

Positions 25, 26, and 30 each coordinate 3-phosphoshikimate. Lys-25 serves as a coordination point for phosphoenolpyruvate. Phosphoenolpyruvate is bound by residues Gly-97 and Arg-125. 4 residues coordinate 3-phosphoshikimate: Ser-170, Gln-172, Asp-323, and Lys-350. Residue Gln-172 participates in phosphoenolpyruvate binding. The active-site Proton acceptor is Asp-323. Phosphoenolpyruvate is bound by residues Arg-354 and Arg-399.

It belongs to the EPSP synthase family. In terms of assembly, monomer.

It localises to the cytoplasm. The catalysed reaction is 3-phosphoshikimate + phosphoenolpyruvate = 5-O-(1-carboxyvinyl)-3-phosphoshikimate + phosphate. Its pathway is metabolic intermediate biosynthesis; chorismate biosynthesis; chorismate from D-erythrose 4-phosphate and phosphoenolpyruvate: step 6/7. In terms of biological role, catalyzes the transfer of the enolpyruvyl moiety of phosphoenolpyruvate (PEP) to the 5-hydroxyl of shikimate-3-phosphate (S3P) to produce enolpyruvyl shikimate-3-phosphate and inorganic phosphate. The sequence is that of 3-phosphoshikimate 1-carboxyvinyltransferase from Bartonella quintana (strain Toulouse) (Rochalimaea quintana).